Consider the following 579-residue polypeptide: F-box protein At5g39450 (579 aa).

The region spanning 16 to 62 is the F-box domain; it reads TCLLLSLPEDVIAVIARFVSPRDICNLSLCCKSLCDVVDSERIWLVQ.

This chain is F-box protein At5g39450, found in Arabidopsis thaliana (Mouse-ear cress).